A 181-amino-acid chain; its full sequence is uncharacterized protein (181 aa).

Gly residues-rich tracts occupy residues 143–156 (RRGGRYGDFGGPRG) and 170–181 (GPFGPGYRGPRF). The segment at 143-181 (RRGGRYGDFGGPRGPRGPRNDGPFGPFGPFGPGYRGPRF) is disordered.

As to quaternary structure, has been detected in a cytochrome bc1-aa3 supercomplex; its deletion however leaves complex activity unaffected.

This is an uncharacterized protein from Corynebacterium glutamicum (strain ATCC 13032 / DSM 20300 / JCM 1318 / BCRC 11384 / CCUG 27702 / LMG 3730 / NBRC 12168 / NCIMB 10025 / NRRL B-2784 / 534).